The primary structure comprises 124 residues: Profilin-2 (124 aa).

It belongs to the profilin family. As to quaternary structure, occurs in many kinds of cells as a complex with monomeric actin in a 1:1 ratio. Interacts with forH.

The protein resides in the cytoplasm. The protein localises to the cytoskeleton. Its function is as follows. Binds to actin and affects the structure of the cytoskeleton. At high concentrations, profilin prevents the polymerization of actin, whereas it enhances it at low concentrations. By binding to PIP2, it inhibits the formation of IP3 and DG. This chain is Profilin-2 (proB), found in Dictyostelium discoideum (Social amoeba).